Consider the following 379-residue polypeptide: Guanine nucleotide-binding protein G(s) subunit alpha (379 aa).

The disordered stretch occupies residues 1–25 (MGCLGNSKTEDQRNEEKVQRETNKK). Glycine 2 carries N-palmitoyl glycine lipidation. Cysteine 3 carries the S-palmitoyl cysteine lipid modification. The segment covering 8–25 (KTEDQRNEEKVQRETNKK) has biased composition (basic and acidic residues). Residues 39–379 (ATHRLLLLGA…RMHLRQYELL (341 aa)) enclose the G-alpha domain. Residues 42-55 (RLLLLGAGESGKSS) form a G1 motif region. GTP is bound by residues 47 to 55 (GAGESGKSS), 182 to 189 (LLRCRVLT), 208 to 212 (DVGGQ), 277 to 280 (NKQD), and alanine 351. Mg(2+) contacts are provided by serine 54 and threonine 189. The interval 181–189 (DLLRCRVLT) is G2 motif. Residues 204 to 213 (FHMFDVGGQR) are G3 motif. Positions 273 to 280 (ILFLNKQD) are G4 motif. Residues 349–354 (TCAVDT) are G5 motif.

It belongs to the G-alpha family. G(s) subfamily. In terms of assembly, heterotrimeric G proteins are composed of 3 units; alpha, beta and gamma. The alpha chain contains the guanine nucleotide binding site.

It localises to the cell membrane. Guanine nucleotide-binding proteins (G proteins) function as transducers in numerous signaling pathways controlled by G protein-coupled receptors (GPCRs). Signaling involves the activation of adenylyl cyclases, resulting in increased levels of the signaling molecule cAMP. GNAS functions downstream of several GPCRs, including beta-adrenergic receptors. Stimulates the Ras signaling pathway. In Xenopus laevis (African clawed frog), this protein is Guanine nucleotide-binding protein G(s) subunit alpha (gnas).